Consider the following 699-residue polypeptide: Putative inactive kinesin-like protein KIN-7B (699 aa).

The Kinesin motor domain maps to 1-170 (MRAIQKKSLC…LLFGSCAKEV (170 aa)). Residues 179 to 247 (VMSDKALVKH…QSRLQDLLQS (69 aa)) are a coiled coil. The tract at residues 249–345 (GDHDLNRQVQ…VNSRHSRPSG (97 aa)) is disordered. Residues 264 to 275 (RSPPSVGMPPSV) are compositionally biased toward low complexity. The segment covering 276–298 (SRDDSSQVSHDDSDLYKEVRCIE) has biased composition (basic and acidic residues). Polar residues predominate over residues 313 to 338 (GESSSPQDSNMNSGLHGNDSNASVNS).

The protein belongs to the TRAFAC class myosin-kinesin ATPase superfamily. Kinesin family. KIN-7 subfamily.

This is Putative inactive kinesin-like protein KIN-7B from Oryza sativa subsp. japonica (Rice).